A 469-amino-acid chain; its full sequence is Probable indole-3-acetic acid-amido synthetase GH3.13 (469 aa).

The tract at residues 1–26 (MTSTSSENAPDHDHDHDASSPAPATA) is disordered. The span at 9–18 (APDHDHDHDA) shows a compositional bias: basic and acidic residues.

The protein belongs to the IAA-amido conjugating enzyme family.

In terms of biological role, may catalyze the synthesis of indole-3-acetic acid (IAA)-amino acid conjugates, providing a mechanism for the plant to cope with the presence of excess auxin. This is Probable indole-3-acetic acid-amido synthetase GH3.13 (GH3.13) from Oryza sativa subsp. japonica (Rice).